The sequence spans 222 residues: Charged multivesicular body protein 4a (222 aa).

Disordered stretches follow at residues 1–21 (MSGLGRLFGKGKKEKGPTPEE) and 180–211 (VGDKEEEPSVKLPSVPSTHLPAGPAPKVDEDE). The interaction with phosphoinosides stretch occupies residues 1–116 (MSGLGRLFGK…ELAAQSMKKA (116 aa)). The interval 1 to 150 (MSGLGRLFGK…QISDAISRPM (150 aa)) is intramolecular interaction with C-terminus. Coiled-coil stretches lie at residues 20–105 (EEAI…VLRT) and 155–180 (DVDEDELLEELEELEQEELAQELLNV). An intramolecular interaction with N-terminus region spans residues 151 to 222 (GFGDDVDEDE…ALKQLAEWVS (72 aa)). Residue Ser-196 is modified to Phosphoserine.

It belongs to the SNF7 family. Probable core component of the endosomal sorting required for transport complex III (ESCRT-III). ESCRT-III components are thought to multimerize to form a flat lattice on the perimeter membrane of the endosome. Several assembly forms of ESCRT-III may exist that interact and act sequentially. Self-associates; overexpression leads to the assembly of filaments that curve and associate to create circular rings. Interacts with CHMP2A. Interacts with CHMP3; the interaction requires the release of CHMP4A autoinhibition. Interacts with CHMP4B. Interacts with CHMP4C. Interacts with CHMP6. Interacts with VPS4A. Interacts with PDCD6IP; the interaction is direct. Widely expressed. Expressed at higher level in heart, kidney, liver and skeletal muscle. Also expressed in brain, placenta, lung and pancreas.

The protein resides in the cytoplasmic vesicle membrane. It localises to the late endosome membrane. Functionally, probable core component of the endosomal sorting required for transport complex III (ESCRT-III) which is involved in multivesicular bodies (MVBs) formation and sorting of endosomal cargo proteins into MVBs. MVBs contain intraluminal vesicles (ILVs) that are generated by invagination and scission from the limiting membrane of the endosome and mostly are delivered to lysosomes enabling degradation of membrane proteins, such as stimulated growth factor receptors, lysosomal enzymes and lipids. The MVB pathway appears to require the sequential function of ESCRT-O, -I,-II and -III complexes. ESCRT-III proteins mostly dissociate from the invaginating membrane before the ILV is released. The ESCRT machinery also functions in topologically equivalent membrane fission events, such as the terminal stages of cytokinesis and the budding of enveloped viruses (HIV-1 and other lentiviruses). ESCRT-III proteins are believed to mediate the necessary vesicle extrusion and/or membrane fission activities, possibly in conjunction with the AAA ATPase VPS4. When overexpressed, membrane-assembled circular arrays of CHMP4A filaments can promote or stabilize negative curvature and outward budding. Via its interaction with PDCD6IP involved in HIV-1 p6- and p9-dependent virus release. CHMP4A/B/C are required for the exosomal release of SDCBP, CD63 and syndecan. The polypeptide is Charged multivesicular body protein 4a (CHMP4A) (Homo sapiens (Human)).